The sequence spans 37 residues: Large ribosomal subunit protein bL36 (37 aa).

It belongs to the bacterial ribosomal protein bL36 family.

This Marinomonas sp. (strain MWYL1) protein is Large ribosomal subunit protein bL36.